The following is a 398-amino-acid chain: Sphingosine 1-phosphate receptor 5 (398 aa).

Topologically, residues 1–40 are extracellular; the sequence is MEPGLLRPAPVSEVIVLHYNYTGKLRGARYQPGAGLRADA. A glycan (N-linked (GlcNAc...) asparagine) is linked at Asn-20. A helical membrane pass occupies residues 41–61; that stretch reads VVCLAVCALIVLENLAVLVVL. Residues 62 to 70 are Cytoplasmic-facing; sequence GRHPRFHAP. A helical transmembrane segment spans residues 71 to 91; it reads MFLLLGSLTLSDLLAGAAYAA. Topologically, residues 92–111 are extracellular; the sequence is NILLSGPLTLRLSPALWFAR. The helical transmembrane segment at 112-132 threads the bilayer; it reads EGGVFVALAASVLSLLAIALE. The Cytoplasmic segment spans residues 133–151; sequence RLLTMERRGPAPAARRGRT. The chain crosses the membrane as a helical span at residues 152–172; that stretch reads LALAAGAWGVSLLLGLLPALG. Over 173-191 the chain is Extracellular; it reads WNCLGRLEACSTVLPLYAK. Residues 192–212 form a helical membrane-spanning segment; it reads AYVLFCVLAFVGILAAICGLY. The Cytoplasmic segment spans residues 213–252; it reads ARIYCQVRAKAQRLRARPGAGEGTSARARGTPRSLALLRT. The chain crosses the membrane as a helical span at residues 253–273; the sequence is LSVVLVAFVACWGPLFLLLLL. The Extracellular segment spans residues 274–287; the sequence is DVACPARACPVLLQ. Residues 288-308 traverse the membrane as a helical segment; that stretch reads ADPFLGLAMANSLLNPIIYTF. The Cytoplasmic portion of the chain corresponds to 309–398; that stretch reads TNRDLRHALL…QTLVPPPAAD (90 aa). Residue Cys-323 is the site of S-palmitoyl cysteine attachment. The interval 332 to 398 is disordered; the sequence is SGTSRSPGST…QTLVPPPAAD (67 aa). The span at 334 to 343 shows a compositional bias: low complexity; the sequence is TSRSPGSTLG. Residue Ser-337 is modified to Phosphoserine. Basic and acidic residues predominate over residues 359 to 373; the sequence is SSSRSERSSPQRDGL. Ser-381 bears the Phosphoserine mark.

The protein belongs to the G-protein coupled receptor 1 family.

It is found in the cell membrane. Its function is as follows. Receptor for the lysosphingolipid sphingosine 1-phosphate (S1P). S1P is a bioactive lysophospholipid that elicits diverse physiological effect on most types of cells and tissues. Is coupled to both the G(i/O)alpha and G(12) subclass of heteromeric G-proteins. The chain is Sphingosine 1-phosphate receptor 5 (S1PR5) from Sus scrofa (Pig).